A 674-amino-acid polypeptide reads, in one-letter code: Dystrophia myotonica WD repeat-containing protein (674 aa).

Alanine 2 is modified (N-acetylalanine). 2 disordered regions span residues 31-92 (GFYK…PALP) and 103-122 (EPDS…LGSG). Over residues 53 to 65 (PVPPQPPQPPPGP) the composition is skewed to pro residues. Residues 66 to 77 (ASASGPGAAGPA) are compositionally biased toward low complexity. A compositionally biased stretch (pro residues) spans 78-90 (SSPPPAGPGPGPA). The segment covering 107-118 (AGAGEPPATPAG) has biased composition (low complexity). 5 WD repeats span residues 211–251 (IDKT…ASAP), 282–321 (VGEG…LRGL), 324–363 (SYFG…VVAR), 366–409 (GHKS…EAAG), and 413–453 (AGGA…LYPH). Disordered regions lie at residues 384–419 (EEAA…APLS), 456–516 (LART…EPGT), 532–573 (RDRG…RSRL), and 637–674 (DEET…GTVV). Composition is skewed to low complexity over residues 457-478 (ARTR…SSRG) and 487-499 (PRSL…LPHP). At serine 495 the chain carries Phosphoserine. Composition is skewed to gly residues over residues 500 to 509 (AGGGKAGGPG) and 550 to 563 (SRGG…GGEK). At arginine 551 the chain carries Omega-N-methylarginine. Residues 601–638 (IAQERLTVLLFLEDCIITACQEGLICTWARPGKAFTDE) form a WD 6 repeat. Residues 642 to 674 (AQTGEGSWPRSPSKSVVEGISSQPGNSPSGTVV) are compositionally biased toward polar residues.

In terms of assembly, component of the USP12/DMWD/WDR48 deubiquitinating complex. Interacts with USP12; promotes its enzymatic activity. Interacts with USP46.

The protein resides in the cytoplasm. It localises to the nucleus. The protein localises to the perikaryon. It is found in the cell projection. Its subcellular location is the dendrite. Regulator of the deubiquitinating USP12/DMWD/WDR48 complex. Functions as a cofactor that promotes USP12 enzymatic activity. In Homo sapiens (Human), this protein is Dystrophia myotonica WD repeat-containing protein.